Reading from the N-terminus, the 437-residue chain is UDP-N-acetylmuramate--L-alanine ligase (437 aa).

108–114 is an ATP binding site; the sequence is GAHGKTS.

Belongs to the MurCDEF family.

Its subcellular location is the cytoplasm. It carries out the reaction UDP-N-acetyl-alpha-D-muramate + L-alanine + ATP = UDP-N-acetyl-alpha-D-muramoyl-L-alanine + ADP + phosphate + H(+). The protein operates within cell wall biogenesis; peptidoglycan biosynthesis. Cell wall formation. The protein is UDP-N-acetylmuramate--L-alanine ligase of Staphylococcus carnosus (strain TM300).